We begin with the raw amino-acid sequence, 445 residues long: Argininosuccinate synthase (445 aa).

Residues 18-26 and Ala44 contribute to the ATP site; that span reads AFSGGLDTS. Residue Tyr100 coordinates L-citrulline. Residues Gly130 and Thr132 each contribute to the ATP site. The L-aspartate site is built by Thr132, Asn136, and Asp137. Position 136 (Asn136) interacts with L-citrulline. Asp137 contacts ATP. Residues Arg140 and Ser193 each contribute to the L-citrulline site. Asp195 is a binding site for ATP. Residues Thr202, Glu204, and Glu281 each coordinate L-citrulline.

This sequence belongs to the argininosuccinate synthase family. Type 2 subfamily. In terms of assembly, homotetramer.

It is found in the cytoplasm. It carries out the reaction L-citrulline + L-aspartate + ATP = 2-(N(omega)-L-arginino)succinate + AMP + diphosphate + H(+). It functions in the pathway amino-acid biosynthesis; L-arginine biosynthesis; L-arginine from L-ornithine and carbamoyl phosphate: step 2/3. This chain is Argininosuccinate synthase (argG), found in Pasteurella multocida (strain Pm70).